Here is a 185-residue protein sequence, read N- to C-terminus: Peptidyl-tRNA hydrolase (185 aa).

Tyr14 provides a ligand contact to tRNA. The Proton acceptor role is filled by His19. TRNA-binding residues include Tyr64, Asn66, and Asn112.

The protein belongs to the PTH family. In terms of assembly, monomer.

It localises to the cytoplasm. It catalyses the reaction an N-acyl-L-alpha-aminoacyl-tRNA + H2O = an N-acyl-L-amino acid + a tRNA + H(+). Its function is as follows. Hydrolyzes ribosome-free peptidyl-tRNAs (with 1 or more amino acids incorporated), which drop off the ribosome during protein synthesis, or as a result of ribosome stalling. Functionally, catalyzes the release of premature peptidyl moieties from peptidyl-tRNA molecules trapped in stalled 50S ribosomal subunits, and thus maintains levels of free tRNAs and 50S ribosomes. This Ligilactobacillus salivarius (strain UCC118) (Lactobacillus salivarius) protein is Peptidyl-tRNA hydrolase.